The chain runs to 1709 residues: Protein SHORTAGE IN CHIASMATA 1 homolog (1709 aa).

Composition is skewed to basic and acidic residues over residues 532 to 542 (PKLQDEDKHSD), 552 to 568 (DPQK…EGGT), and 1601 to 1613 (ESFR…DTPS). 2 disordered regions span residues 532–586 (PKLQ…SSFP) and 1566–1662 (KRKA…DPTW).

It belongs to the XPF family. Interacts (via C-terminus) with PTD. Interacts with ZIP4. As to expression, highly expressed in anthers and pistil during meiosis. Expressed in pollen mother cells (PMCs) during meiosis. Expressed at low levels in roots, shoots, leaves, flowers, and glumes.

It is found in the chromosome. Its subcellular location is the nucleus. The protein resides in the cytoplasm. The protein localises to the cell membrane. In terms of biological role, essential for normal crossover (CO) formation during meiosis. Essential component for the formation of class I meiotic COs. Interacts with PTD, another meiotic component, to regulate CO formation, possibly by stabilizing the recombination intermediates during meiosis. SHOC1 and PTD may form transient heterotrimeric or heterotetrameric complexes with HEI10 and/or ZIP4 to promote class I COs formation. Does not seem to be involved in early meiotic recombination steps involving double-strand break (DSB) formation, processing, and single-strand invasion. Does not seem to be involved in homologous pairing or synaptonemal complex (SC) assembly. The chain is Protein SHORTAGE IN CHIASMATA 1 homolog from Oryza sativa subsp. japonica (Rice).